A 319-amino-acid polypeptide reads, in one-letter code: Plastid lipid-associated protein 2, chloroplastic (319 aa).

A chloroplast-targeting transit peptide spans M1–R59. A disordered region spans residues Q17 to T39. Positions S18–S36 are enriched in low complexity.

The protein belongs to the PAP/fibrillin family. In terms of tissue distribution, expressed almost exclusively in petals. Very weak expression in all other organs.

The protein localises to the plastid. It localises to the chloroplast. Functionally, may stabilize the accumulated carotenoid structures. This Brassica campestris (Field mustard) protein is Plastid lipid-associated protein 2, chloroplastic (PAP2).